The sequence spans 426 residues: Putative 3-oxoacyl-[acyl-carrier-protein] synthase, mitochondrial (426 aa).

Residues 1–18 constitute a mitochondrion transit peptide; that stretch reads MKRVVITGLGAVTPLGNG. Positions 19 to 423 constitute a Ketosynthase family 3 (KS3) domain; it reads VKTNWRNLIQ…GTNASLCFKK (405 aa). Residues cysteine 170, histidine 311, and histidine 351 each act as for beta-ketoacyl synthase activity in the active site.

It belongs to the thiolase-like superfamily. Beta-ketoacyl-ACP synthases family.

Its subcellular location is the mitochondrion. It catalyses the reaction a fatty acyl-[ACP] + malonyl-[ACP] + H(+) = a 3-oxoacyl-[ACP] + holo-[ACP] + CO2. The enzyme catalyses butanoyl-[ACP] + malonyl-[ACP] + H(+) = 3-oxohexanoyl-[ACP] + holo-[ACP] + CO2. The catalysed reaction is hexanoyl-[ACP] + malonyl-[ACP] + H(+) = 3-oxooctanoyl-[ACP] + holo-[ACP] + CO2. It carries out the reaction octanoyl-[ACP] + malonyl-[ACP] + H(+) = 3-oxodecanoyl-[ACP] + holo-[ACP] + CO2. It catalyses the reaction decanoyl-[ACP] + malonyl-[ACP] + H(+) = 3-oxododecanoyl-[ACP] + holo-[ACP] + CO2. The enzyme catalyses dodecanoyl-[ACP] + malonyl-[ACP] + H(+) = 3-oxotetradecanoyl-[ACP] + holo-[ACP] + CO2. The catalysed reaction is tetradecanoyl-[ACP] + malonyl-[ACP] + H(+) = 3-oxohexadecanoyl-[ACP] + holo-[ACP] + CO2. The protein operates within lipid metabolism; fatty acid biosynthesis. May play a role in the biosynthesis of lipoic acid as well as longer chain fatty acids required for optimal mitochondrial function. The chain is Putative 3-oxoacyl-[acyl-carrier-protein] synthase, mitochondrial from Schizosaccharomyces pombe (strain 972 / ATCC 24843) (Fission yeast).